Here is a 328-residue protein sequence, read N- to C-terminus: Alanine racemase (328 aa).

Catalysis depends on Lys33, which acts as the Proton acceptor; specific for D-alanine. Lys33 carries the post-translational modification N6-(pyridoxal phosphate)lysine. Residue Arg118 coordinates substrate. Residue Tyr237 is the Proton acceptor; specific for L-alanine of the active site. Substrate is bound at residue Met283.

The protein belongs to the alanine racemase family. Requires pyridoxal 5'-phosphate as cofactor.

The catalysed reaction is L-alanine = D-alanine. It participates in amino-acid biosynthesis; D-alanine biosynthesis; D-alanine from L-alanine: step 1/1. Its function is as follows. Catalyzes the interconversion of L-alanine and D-alanine. May also act on other amino acids. This is Alanine racemase (alr) from Campylobacter jejuni subsp. jejuni serotype O:6 (strain 81116 / NCTC 11828).